We begin with the raw amino-acid sequence, 150 residues long: Ribonuclease K6 (150 aa).

An N-terminal signal peptide occupies residues 1–23; sequence MVLCFPLLLLLLVLWGPVCLLHA. The Proton acceptor role is filled by histidine 38. Intrachain disulfides connect cysteine 46–cysteine 104, cysteine 60–cysteine 114, cysteine 78–cysteine 129, and cysteine 85–cysteine 92. N-linked (GlcNAc...) asparagine glycosylation is present at asparagine 55. Residues 61-65 and lysine 86 contribute to the substrate site; that span reads KHQNT. Residue asparagine 100 is glycosylated (N-linked (GlcNAc...) asparagine). Arginine 105 contacts substrate. Histidine 145 functions as the Proton donor in the catalytic mechanism.

It belongs to the pancreatic ribonuclease family. Interacts (via N-terminus) with bacterial lipopolysaccharide (LPS).

The protein resides in the secreted. Its subcellular location is the lysosome. It is found in the cytoplasmic granule. Ribonuclease which shows a preference for the pyrimidines uridine and cytosine. Has potent antibacterial activity against a range of Gram-positive and Gram-negative bacteria, including P.aeruginosa, A.baumanii, M.luteus, S.aureus, E.faecalis, E.faecium, S.saprophyticus and E.coli. Causes loss of bacterial membrane integrity, and also promotes agglutination of Gram-negative bacteria. Probably contributes to urinary tract sterility. Bactericidal activity is independent of RNase activity. This chain is Ribonuclease K6 (RNASE6), found in Miopithecus talapoin (Angolan talapoin).